The following is a 238-amino-acid chain: Ribonuclease PH (238 aa).

Phosphate is bound by residues Arg86 and 124-126 (GTR).

This sequence belongs to the RNase PH family. In terms of assembly, homohexameric ring arranged as a trimer of dimers.

It catalyses the reaction tRNA(n+1) + phosphate = tRNA(n) + a ribonucleoside 5'-diphosphate. Functionally, phosphorolytic 3'-5' exoribonuclease that plays an important role in tRNA 3'-end maturation. Removes nucleotide residues following the 3'-CCA terminus of tRNAs; can also add nucleotides to the ends of RNA molecules by using nucleoside diphosphates as substrates, but this may not be physiologically important. Probably plays a role in initiation of 16S rRNA degradation (leading to ribosome degradation) during starvation. The polypeptide is Ribonuclease PH (Chromobacterium violaceum (strain ATCC 12472 / DSM 30191 / JCM 1249 / CCUG 213 / NBRC 12614 / NCIMB 9131 / NCTC 9757 / MK)).